The sequence spans 309 residues: MPIRVPDELPAVNFLREENVFVMTTSRASGQEIRPLKVLILNLMPKKIETENQFLRLLSNSPLQVDIQLLRIDSRESRNTPAEHLNNFYCNFEDIQEQNFDGLIVTGAPLGLVEFNDVAYWPQIKQVLEWSKDHVTSTLFVCWAVQAALNILYGIPKQTRTDKLSGVYEHHILHPHALLTRGFDDSFLAPHSRYADFPAALIRDYTDLEILAETEEGDAYLFASKDKRIAFVTGHPEYDAQTLAQEYFRDVEAGLDPDVPYNYFPHNDPQNKPRASWRSHGNLLFTNWLNYYVYQITPYDLRHMNPTLD.

C142 acts as the Acyl-thioester intermediate in catalysis. K163 and S192 together coordinate substrate. The Proton acceptor role is filled by H235. The active site involves E237. R249 lines the substrate pocket.

This sequence belongs to the MetA family. As to quaternary structure, homodimer.

The protein localises to the cytoplasm. The enzyme catalyses L-homoserine + succinyl-CoA = O-succinyl-L-homoserine + CoA. It functions in the pathway amino-acid biosynthesis; L-methionine biosynthesis via de novo pathway; O-succinyl-L-homoserine from L-homoserine: step 1/1. Functionally, transfers a succinyl group from succinyl-CoA to L-homoserine, forming succinyl-L-homoserine. The sequence is that of Homoserine O-succinyltransferase from Shigella sonnei (strain Ss046).